The sequence spans 44 residues: Conotoxin S5.1 (44 aa).

Contains 3 disulfide bonds. Expressed by the venom duct.

The protein localises to the secreted. The polypeptide is Conotoxin S5.1 (Conus striatus (Striated cone)).